A 494-amino-acid polypeptide reads, in one-letter code: 5'-3' exonuclease PLD3 (494 aa).

At 1 to 37 (MNPKVEYKQIQSHDEAENQVLQHECHQAKARKYYRCA) the chain is on the cytoplasmic side. Residues 38 to 58 (VVIAIIITLLFCVLASQLLLF) traverse the membrane as a helical; Signal-anchor for type II membrane protein segment. Over 59-494 (PLFSITSQTT…LSSWKEKCIF (436 aa)) the chain is Lumenal. Residue asparagine 100 is glycosylated (N-linked (GlcNAc...) asparagine). The PLD phosphodiesterase 1 domain occupies 198–225 (TDGVLHTKFWVVDSEHFYIGSANMDWRS). Residues histidine 203, lysine 205, and aspartate 210 contribute to the active site. N-linked (GlcNAc...) asparagine glycans are attached at residues asparagine 238, asparagine 260, asparagine 270, asparagine 286, and asparagine 389. The 27-residue stretch at 413-439 (YARVNHNKYMVTDRVAYIGTSNWSGDY) folds into the PLD phosphodiesterase 2 domain. Residues histidine 418, lysine 420, and aspartate 425 contribute to the active site. Asparagine 434, asparagine 451, and asparagine 477 each carry an N-linked (GlcNAc...) asparagine glycan.

Belongs to the phospholipase D family. In terms of processing, N-glycosylated. Post-translationally, proteolytically processed to a soluble form that is stable within endosomes and lysosomes. During transport through the secretory pathway becomes proteolysed by cysteine proteases, thereby releasing a stable soluble lysosomal lumenal polypeptide, whereas the transmembrane-bound fragment is rapidly degraded. Its transport route to lysosomes involves ubiquitination and the ESCRT complex. Ubiquitinated. Ubiquitination mediates sorting into lysosomes.

The protein localises to the endoplasmic reticulum membrane. It localises to the lysosome lumen. It is found in the early endosome membrane. The protein resides in the late endosome membrane. Its subcellular location is the golgi apparatus membrane. The protein localises to the endosome membrane. The enzyme catalyses Exonucleolytic cleavage in the 5'- to 3'-direction to yield nucleoside 3'-phosphates.. In terms of biological role, 5'-&gt;3' DNA exonuclease which digests single-stranded DNA (ssDNA). Regulates inflammatory cytokine responses via the degradation of nucleic acids, by reducing the concentration of ssDNA able to stimulate TLR9, a nucleotide-sensing receptor in collaboration with PLD4. May be important in myotube formation. Plays a role in lysosomal homeostasis. Involved in the regulation of endosomal protein sorting. The polypeptide is 5'-3' exonuclease PLD3 (pld3) (Xenopus tropicalis (Western clawed frog)).